The primary structure comprises 114 residues: Putative antiporter subunit mnhC2 (114 aa).

A run of 3 helical transmembrane segments spans residues 3–23 (LILLLVIGFLVFIGTYMILSI), 25–45 (LIRIVIGISIYTHAGNLIIMS), and 72–92 (AIVLTAIVIGFGMTAFLLVLI).

This sequence belongs to the CPA3 antiporters (TC 2.A.63) subunit C family. In terms of assembly, may form a heterooligomeric complex that consists of seven subunits: mnhA2, mnhB2, mnhC2, mnhD2, mnhE2, mnhF2 and mnhG2.

It localises to the cell membrane. The protein is Putative antiporter subunit mnhC2 (mnhC2) of Staphylococcus epidermidis (strain ATCC 12228 / FDA PCI 1200).